A 310-amino-acid polypeptide reads, in one-letter code: Protoheme IX farnesyltransferase 2 (310 aa).

The next 9 membrane-spanning stretches (helical) occupy residues 25–45 (PGII…AAKG), 49–69 (LVLM…GCAI), 98–118 (HVLL…ALFT), 121–141 (LALL…SLYM), 145–165 (SVYG…VGYC), 176–196 (VILL…IAIF), 222–242 (IVLY…AGYT), 245–265 (AFMA…LKGY), and 277–297 (QVFG…ALDF).

Belongs to the UbiA prenyltransferase family. Protoheme IX farnesyltransferase subfamily.

The protein resides in the cell inner membrane. The catalysed reaction is heme b + (2E,6E)-farnesyl diphosphate + H2O = Fe(II)-heme o + diphosphate. It functions in the pathway porphyrin-containing compound metabolism; heme O biosynthesis; heme O from protoheme: step 1/1. In terms of biological role, converts heme B (protoheme IX) to heme O by substitution of the vinyl group on carbon 2 of heme B porphyrin ring with a hydroxyethyl farnesyl side group. In Shewanella sp. (strain ANA-3), this protein is Protoheme IX farnesyltransferase 2.